Here is a 429-residue protein sequence, read N- to C-terminus: Serine hydroxymethyltransferase (429 aa).

Residues L127 and 131 to 133 (GHL) each bind (6S)-5,6,7,8-tetrahydrofolate. Position 236 is an N6-(pyridoxal phosphate)lysine (K236). E252 contacts (6S)-5,6,7,8-tetrahydrofolate.

The protein belongs to the SHMT family. In terms of assembly, homodimer. Requires pyridoxal 5'-phosphate as cofactor.

The protein resides in the cytoplasm. It carries out the reaction (6R)-5,10-methylene-5,6,7,8-tetrahydrofolate + glycine + H2O = (6S)-5,6,7,8-tetrahydrofolate + L-serine. Its pathway is one-carbon metabolism; tetrahydrofolate interconversion. It participates in amino-acid biosynthesis; glycine biosynthesis; glycine from L-serine: step 1/1. Catalyzes the reversible interconversion of serine and glycine with tetrahydrofolate (THF) serving as the one-carbon carrier. This reaction serves as the major source of one-carbon groups required for the biosynthesis of purines, thymidylate, methionine, and other important biomolecules. Also exhibits THF-independent aldolase activity toward beta-hydroxyamino acids, producing glycine and aldehydes, via a retro-aldol mechanism. This Rhodospirillum centenum (strain ATCC 51521 / SW) protein is Serine hydroxymethyltransferase.